The following is a 96-amino-acid chain: Putative pterin-4-alpha-carbinolamine dehydratase (96 aa).

The protein belongs to the pterin-4-alpha-carbinolamine dehydratase family.

The enzyme catalyses (4aS,6R)-4a-hydroxy-L-erythro-5,6,7,8-tetrahydrobiopterin = (6R)-L-erythro-6,7-dihydrobiopterin + H2O. In Synechocystis sp. (strain ATCC 27184 / PCC 6803 / Kazusa), this protein is Putative pterin-4-alpha-carbinolamine dehydratase.